We begin with the raw amino-acid sequence, 696 residues long: MEKTEKNELVRKLIFNPQGDREASKRKIIKGNPTNIFELNEIKYSWAFDLYKLMGFTNFWIPEEIQMLEDRKQYETVLSDYEKRAYELVLSFLIALDSFQVDMLKEFGRMITAPEVEMAITAQEFQESVHAYSYQFILESVVDPVKADEIYNYWREDERLLERNKVIAELYNEFIRKPNEENFIKATIGNYILESLYFYSGFAFFYTLGRQGKMRNTVQQIKYINRDELCFIEGTEVLTKRGFVDFRELREDDLVAQYDIETGEISWTKPYAYVERDYEGSMYRLKHPKSNWEVVATEGHEFIVRNLKTGKERKEPIEKVKLHPYSAIPVAGRYTGEVEEYDLWELVSGKGITLKTRSAVKNKLTPIEKLLIVLQADGTIDSKRNGKFTGFQQLKFFFSKYRKINEFEKILNECAPYGIKWKKYERQDGIAYTVYYPNDLPIKPTKFFDEWVRLDEITEEWIREFVEELVKWDGHIPKDRNKKKVYYYSTKEKRNKDFVQALCALGGMRTVVSRERNPKAKNPVYRIWIYLEDDYINTQTMVKEEFYYKGKVYCVSVPKGNIVVRYKDSVCIAGNCHVTLFRNIINTLRKENPELFTPEIEKWIVEYFKYAVNEEIKWGQYVTQNQILGINDVLIERYIKYLGNLRITQIGFDPIYPEVTENPLKWIDEFRKINNTKTDFFQAKPQTYSKANELKW.

Fe cation contacts are provided by D97, E127, and H130. The active site involves Y134. The Fe cation site is built by E194 and E228. Positions 377-507 constitute a DOD-type homing endonuclease domain; the sequence is DGTIDSKRNG…FVQALCALGG (131 aa). H577 contacts Fe cation.

The protein belongs to the ribonucleoside diphosphate reductase small chain family. In terms of assembly, tetramer of two alpha and two beta subunits. Fe cation is required as a cofactor. This protein undergoes a protein self splicing that involves a post-translational excision of the intervening region (intein) followed by peptide ligation.

It catalyses the reaction a 2'-deoxyribonucleoside 5'-diphosphate + [thioredoxin]-disulfide + H2O = a ribonucleoside 5'-diphosphate + [thioredoxin]-dithiol. Its function is as follows. Provides the precursors necessary for DNA synthesis. Catalyzes the biosynthesis of deoxyribonucleotides from the corresponding ribonucleotides. This chain is Ribonucleoside-diphosphate reductase subunit beta (nrdB), found in Aquifex aeolicus (strain VF5).